We begin with the raw amino-acid sequence, 259 residues long: Flap endonuclease Xni (259 aa).

A Mg(2+)-binding site is contributed by Asp109. A 5'-3' exonuclease domain is found at 165–255 (VKPQQLSDYW…FNLQDLRFTA (91 aa)). The K(+) site is built by Leu176, Ile187, and Ile190. Positions 189 to 194 (GIGPKA) are interaction with DNA.

The protein belongs to the Xni family. The cofactor is Mg(2+). K(+) is required as a cofactor.

Its function is as follows. Has flap endonuclease activity. During DNA replication, flap endonucleases cleave the 5'-overhanging flap structure that is generated by displacement synthesis when DNA polymerase encounters the 5'-end of a downstream Okazaki fragment. In Vibrio vulnificus (strain CMCP6), this protein is Flap endonuclease Xni.